The chain runs to 296 residues: MDFIRLKSRAKINLSIDVLGKRQDGYHFVEMIMQTIDLYDIVKIKELDEDEIKVKSTSLDIPLDEDNIVYKAAKILKNKFYIKKGVEIFIEKNIPVAAGMAGGSSNAAAVLVGLNHLWELRLSEDELKEIGLNLGADVPFCISGRPALAQGIGEKLTNIKGLPCDTNILICKPDLFVSTKEVYQGLDLNNIKKRPNNKYLIECLKSEDIKAVSESMVNILENVTIGKHKEISDIKQVMMKNNALGSMMSGSGPTVFGLFKNKEDALIGKKELLKKYKQVYVVNSSQKGVEICGEFN.

The active site involves K11. ATP is bound at residue 95-105 (PVAAGMAGGSS). The active site involves D137.

This sequence belongs to the GHMP kinase family. IspE subfamily.

It catalyses the reaction 4-CDP-2-C-methyl-D-erythritol + ATP = 4-CDP-2-C-methyl-D-erythritol 2-phosphate + ADP + H(+). It participates in isoprenoid biosynthesis; isopentenyl diphosphate biosynthesis via DXP pathway; isopentenyl diphosphate from 1-deoxy-D-xylulose 5-phosphate: step 3/6. Functionally, catalyzes the phosphorylation of the position 2 hydroxy group of 4-diphosphocytidyl-2C-methyl-D-erythritol. The polypeptide is 4-diphosphocytidyl-2-C-methyl-D-erythritol kinase (Clostridioides difficile (strain 630) (Peptoclostridium difficile)).